The chain runs to 234 residues: 7-carboxy-7-deazaguanine synthase (234 aa).

Substrate-binding positions include 36–38 and R51; that span reads IQG. The 193-residue stretch at 42 to 234 folds into the Radical SAM core domain; that stretch reads FVGYPSIFIR…LQTHKFLGIE (193 aa). Residues C55, C59, and C62 each coordinate [4Fe-4S] cluster. Residue T64 participates in Mg(2+) binding. T100 contacts substrate. S-adenosyl-L-methionine contacts are provided by residues G102, 144 to 146, and 195 to 198; these read SPK and QSMD.

Belongs to the radical SAM superfamily. 7-carboxy-7-deazaguanine synthase family. As to quaternary structure, homodimer. [4Fe-4S] cluster is required as a cofactor. Requires S-adenosyl-L-methionine as cofactor. Mg(2+) serves as cofactor.

The enzyme catalyses 6-carboxy-5,6,7,8-tetrahydropterin + H(+) = 7-carboxy-7-deazaguanine + NH4(+). The protein operates within purine metabolism; 7-cyano-7-deazaguanine biosynthesis. Catalyzes the complex heterocyclic radical-mediated conversion of 6-carboxy-5,6,7,8-tetrahydropterin (CPH4) to 7-carboxy-7-deazaguanine (CDG), a step common to the biosynthetic pathways of all 7-deazapurine-containing compounds. This Rickettsia prowazekii (strain Madrid E) protein is 7-carboxy-7-deazaguanine synthase.